We begin with the raw amino-acid sequence, 77 residues long: MKLTCALIITVLFLSITADDSRGKQGYRALKSIAGMLNSKTVRECREQSQGCTNTSPPCCSGLRCSGQSQGGVCISN.

The N-terminal stretch at 1 to 19 (MKLTCALIITVLFLSITAD) is a signal peptide. Residues 20-43 (DSRGKQGYRALKSIAGMLNSKTVR) constitute a propeptide that is removed on maturation. Disulfide bonds link cysteine 45–cysteine 60, cysteine 52–cysteine 65, and cysteine 59–cysteine 74.

This sequence belongs to the conotoxin O1 superfamily. Expressed by the venom duct.

Its subcellular location is the secreted. The protein is Conotoxin CaHr91 of Conus capitaneus (Captain cone).